We begin with the raw amino-acid sequence, 268 residues long: Octanoyltransferase (268 aa).

One can recognise a BPL/LPL catalytic domain in the interval 73–261 (GEADELVWLL…AFEEVFGPAV (189 aa)). Substrate contacts are provided by residues 112–119 (RGGEYTYH), 192–194 (ALG), and 205–207 (GLS). C223 acts as the Acyl-thioester intermediate in catalysis.

The protein belongs to the LipB family.

Its subcellular location is the cytoplasm. It catalyses the reaction octanoyl-[ACP] + L-lysyl-[protein] = N(6)-octanoyl-L-lysyl-[protein] + holo-[ACP] + H(+). It participates in protein modification; protein lipoylation via endogenous pathway; protein N(6)-(lipoyl)lysine from octanoyl-[acyl-carrier-protein]: step 1/2. Its function is as follows. Catalyzes the transfer of endogenously produced octanoic acid from octanoyl-acyl-carrier-protein onto the lipoyl domains of lipoate-dependent enzymes. Lipoyl-ACP can also act as a substrate although octanoyl-ACP is likely to be the physiological substrate. The sequence is that of Octanoyltransferase from Agrobacterium fabrum (strain C58 / ATCC 33970) (Agrobacterium tumefaciens (strain C58)).